The chain runs to 474 residues: P2X purinoceptor 2 (474 aa).

The Cytoplasmic portion of the chain corresponds to 1–42 (MAATHPKAPTAQRLRQGWSAFWDYETPKVIVVRNRPLGVVYR). Residues 43 to 60 (AVQLLILLYFVWYVFIVQ) form a helical membrane-spanning segment. Residues 61–333 (KSYQDSETGP…IVHGQAGKFS (273 aa)) are Extracellular-facing. 2 residues coordinate ATP: lysine 77 and lysine 79. 3 cysteine pairs are disulfide-bonded: cysteine 121-cysteine 172, cysteine 132-cysteine 155, and cysteine 138-cysteine 166. N-linked (GlcNAc...) asparagine glycosylation occurs at asparagine 129. Asparagine 190 carries an N-linked (GlcNAc...) asparagine glycan. Position 192 (threonine 192) interacts with ATP. The cysteines at positions 222 and 232 are disulfide-linked. An N-linked (GlcNAc...) asparagine glycan is attached at asparagine 247. Cysteine 266 and cysteine 275 form a disulfide bridge. Serine 292, asparagine 296, and arginine 298 together coordinate ATP. The N-linked (GlcNAc...) asparagine glycan is linked to asparagine 306. ATP is bound at residue lysine 315. The interval 316 to 329 (AYGIRIDVIVHGQA) is pore-forming motif. The helical transmembrane segment at 334 to 354 (LIPTIINLATALTSIGVGSFL) threads the bilayer. Residues 355-474 (CDWILLTFMN…PTDPKGLAQL (120 aa)) are Cytoplasmic-facing. Positions 445 to 474 (PDRCVGQGLPSSESPLQDSTPTDPKGLAQL) are disordered. The span at 453 to 466 (LPSSESPLQDSTPT) shows a compositional bias: polar residues.

This sequence belongs to the P2X receptor family. As to quaternary structure, homotrimer and heterotrimer; functional P2XRs are organized as homomeric and heteromeric trimers. Homotrimer. Forms heterodimer with P2RX1. Forms heterotrimer with P2RX6. Forms heterotrimer with P2RX3. In terms of tissue distribution, express in organ of Corti.

It localises to the cell membrane. The enzyme catalyses Ca(2+)(in) = Ca(2+)(out). It carries out the reaction K(+)(in) = K(+)(out). The catalysed reaction is Na(+)(in) = Na(+)(out). Its activity is regulated as follows. Fast activation by external ATP. Exhibits slow desensitization during prolonged ATP activation. Not sensitive to the ATP agonist:alpha/beta-methylene-ATP. Its function is as follows. ATP-gated nonselective transmembrane cation channel permeable to potassium, sodium and calcium. Activation by extracellular ATP induces a variety of cellular responses, such as excitatory postsynaptic responses in sensory neurons, neuromuscular junctions (NMJ) formation, hearing, perception of taste and peristalsis. In the inner ear, regulates sound transduction and auditory neurotransmission, outer hair cell electromotility, inner ear gap junctions, and K(+) recycling. Mediates synaptic transmission between neurons and from neurons to smooth muscle. In Cavia porcellus (Guinea pig), this protein is P2X purinoceptor 2 (P2RX2).